We begin with the raw amino-acid sequence, 371 residues long: Aminomethyltransferase (371 aa).

This sequence belongs to the GcvT family. In terms of assembly, the glycine cleavage system is composed of four proteins: P, T, L and H.

The catalysed reaction is N(6)-[(R)-S(8)-aminomethyldihydrolipoyl]-L-lysyl-[protein] + (6S)-5,6,7,8-tetrahydrofolate = N(6)-[(R)-dihydrolipoyl]-L-lysyl-[protein] + (6R)-5,10-methylene-5,6,7,8-tetrahydrofolate + NH4(+). In terms of biological role, the glycine cleavage system catalyzes the degradation of glycine. This is Aminomethyltransferase from Pectobacterium atrosepticum (strain SCRI 1043 / ATCC BAA-672) (Erwinia carotovora subsp. atroseptica).